Consider the following 368-residue polypeptide: uncharacterized protein (368 aa).

Positions 237-287 (ESLSIPSRRRPSSIAPIGTRPSRKEIAFSNSSTPTDQTLRPPNPPAANGNA) are disordered. Residues 238–253 (SLSIPSRRRPSSIAPI) are compositionally biased toward low complexity. Polar residues predominate over residues 264 to 276 (FSNSSTPTDQTLR).

This is an uncharacterized protein from Schizosaccharomyces pombe (strain 972 / ATCC 24843) (Fission yeast).